The chain runs to 420 residues: Phospholipase A1-II 3 (420 aa).

The signal sequence occupies residues 1 to 21 (MCCFLLVSVLLATTLTDVASA). The N-linked (GlcNAc...) asparagine glycan is linked to asparagine 231. Catalysis depends on serine 240, which acts as the Acyl-ester intermediate. Serine 240 serves as the catalytic Charge relay system. The N-linked (GlcNAc...) asparagine glycan is linked to asparagine 294. Residues aspartate 305 and histidine 343 each act as charge relay system in the active site. The stretch at 367–388 (VVDRDLALVNKEVDALRDEYQV) forms a coiled coil. Residue asparagine 403 is glycosylated (N-linked (GlcNAc...) asparagine).

It belongs to the AB hydrolase superfamily. Lipase family.

It is found in the secreted. Functionally, acylhydrolase that catalyzes the hydrolysis of phospholipids at the sn-1 position. The polypeptide is Phospholipase A1-II 3 (Oryza sativa subsp. indica (Rice)).